A 299-amino-acid chain; its full sequence is Oxygen-dependent coproporphyrinogen-III oxidase (299 aa).

Ser92 lines the substrate pocket. Mn(2+)-binding residues include His96 and His106. The active-site Proton donor is His106. Substrate is bound at residue 108–110 (NVR). Positions 145 and 175 each coordinate Mn(2+). The interval 240–275 (YVEFNLVWDRGTLFGLQTGGRTESILMSMPPLVRWE) is important for dimerization. 258 to 260 (GGR) is a binding site for substrate.

The protein belongs to the aerobic coproporphyrinogen-III oxidase family. In terms of assembly, homodimer. Requires Mn(2+) as cofactor.

The protein resides in the cytoplasm. The catalysed reaction is coproporphyrinogen III + O2 + 2 H(+) = protoporphyrinogen IX + 2 CO2 + 2 H2O. It functions in the pathway porphyrin-containing compound metabolism; protoporphyrin-IX biosynthesis; protoporphyrinogen-IX from coproporphyrinogen-III (O2 route): step 1/1. Its function is as follows. Involved in the heme biosynthesis. Catalyzes the aerobic oxidative decarboxylation of propionate groups of rings A and B of coproporphyrinogen-III to yield the vinyl groups in protoporphyrinogen-IX. This is Oxygen-dependent coproporphyrinogen-III oxidase from Escherichia coli (strain SMS-3-5 / SECEC).